The primary structure comprises 506 residues: Asparagine--tRNA ligase (506 aa).

Belongs to the class-II aminoacyl-tRNA synthetase family. Homodimer.

It localises to the cytoplasm. The catalysed reaction is tRNA(Asn) + L-asparagine + ATP = L-asparaginyl-tRNA(Asn) + AMP + diphosphate + H(+). This Onion yellows phytoplasma (strain OY-M) protein is Asparagine--tRNA ligase.